Reading from the N-terminus, the 136-residue chain is 6,7-dimethyl-8-ribityllumazine synthase (136 aa).

Residues phenylalanine 11, 43–45 (SFD), and 67–69 (AVI) each bind 5-amino-6-(D-ribitylamino)uracil. 72 to 73 (ET) contributes to the (2S)-2-hydroxy-3-oxobutyl phosphate binding site. Residue histidine 75 is the Proton donor of the active site. Residue leucine 100 coordinates 5-amino-6-(D-ribitylamino)uracil. Residue arginine 115 participates in (2S)-2-hydroxy-3-oxobutyl phosphate binding.

This sequence belongs to the DMRL synthase family.

The enzyme catalyses (2S)-2-hydroxy-3-oxobutyl phosphate + 5-amino-6-(D-ribitylamino)uracil = 6,7-dimethyl-8-(1-D-ribityl)lumazine + phosphate + 2 H2O + H(+). It participates in cofactor biosynthesis; riboflavin biosynthesis; riboflavin from 2-hydroxy-3-oxobutyl phosphate and 5-amino-6-(D-ribitylamino)uracil: step 1/2. Catalyzes the formation of 6,7-dimethyl-8-ribityllumazine by condensation of 5-amino-6-(D-ribitylamino)uracil with 3,4-dihydroxy-2-butanone 4-phosphate. This is the penultimate step in the biosynthesis of riboflavin. This is 6,7-dimethyl-8-ribityllumazine synthase from Picrophilus torridus (strain ATCC 700027 / DSM 9790 / JCM 10055 / NBRC 100828 / KAW 2/3).